Reading from the N-terminus, the 297-residue chain is tRNA pseudouridine synthase B (297 aa).

D44 (nucleophile) is an active-site residue.

The protein belongs to the pseudouridine synthase TruB family. Type 1 subfamily.

It carries out the reaction uridine(55) in tRNA = pseudouridine(55) in tRNA. Its function is as follows. Responsible for synthesis of pseudouridine from uracil-55 in the psi GC loop of transfer RNAs. This chain is tRNA pseudouridine synthase B, found in Corynebacterium aurimucosum (strain ATCC 700975 / DSM 44827 / CIP 107346 / CN-1) (Corynebacterium nigricans).